We begin with the raw amino-acid sequence, 1006 residues long: Pentatricopeptide repeat-containing protein At1g30610, chloroplastic (1006 aa).

The N-terminal 40 residues, 1 to 40 (MAVTISTNAFVNASLLDESRNSFWRPLFHQPYYNCRRVVR), are a transit peptide targeting the chloroplast. Disordered stretches follow at residues 180–219 (LSKSGESSVTVPEDESFRKRYSKQEYHRSSDTSRGIERGS) and 248–292 (SSVA…IARG). A compositionally biased stretch (basic and acidic residues) spans 194–219 (ESFRKRYSKQEYHRSSDTSRGIERGS). A compositionally biased stretch (polar residues) spans 254–263 (WSNSGESSVT). The segment covering 265-284 (PKDESFRRRYSKQEHHRSSD) has biased composition (basic and acidic residues). PPR repeat units lie at residues 468 to 502 (TDYTVMRLIHFLGKLGNWRRVLQVIEWLQRQDRYK), 506 to 536 (IRIIYTTALNVLGKSRRPVEALNVFHAMLLQ), 542 to 572 (DMVAYRSIAVTLGQAGHIKELFYVIDTMRSP), 592 to 626 (DVVVYNAVLNACVQRKQWEGAFWVLQQLKQRGQKP), 627 to 657 (SPVTYGLIMEVMLACEKYNLVHEFFRKMQKS), 661 to 695 (NALAYRVLVNTLWKEGKSDEAVHTVEDMESRGIVG), 759 to 789 (LVVTYTGLIQACVDSGNIKNAAYIFDQMKKV), 793 to 827 (NLVTCNIMLKAYLQGGLFEEARELFQKMSEDGNHI), 840 to 874 (DTYTFNTMLDTCAEQEKWDDFGYAYREMLRHGYHF), and 875 to 909 (NAKRHLRMVLEASRAGKEEVMEATWEHMRRSNRIP).

This sequence belongs to the PPR family. P subfamily.

Its subcellular location is the plastid. It localises to the chloroplast. May play a role in embryogenesis. The sequence is that of Pentatricopeptide repeat-containing protein At1g30610, chloroplastic (EMB2279) from Arabidopsis thaliana (Mouse-ear cress).